The sequence spans 118 residues: Large ribosomal subunit protein bL19 (118 aa).

This sequence belongs to the bacterial ribosomal protein bL19 family.

Functionally, this protein is located at the 30S-50S ribosomal subunit interface and may play a role in the structure and function of the aminoacyl-tRNA binding site. The protein is Large ribosomal subunit protein bL19 of Citrifermentans bemidjiense (strain ATCC BAA-1014 / DSM 16622 / JCM 12645 / Bem) (Geobacter bemidjiensis).